Here is a 371-residue protein sequence, read N- to C-terminus: Conglutinin (371 aa).

The first 20 residues, 1–20 (MLLLPLSVLLLLTQPWRSLG), serve as a signal peptide directing secretion. In terms of domain architecture, Collagen-like spans 46-216 (GLPGHDGQDG…TGAKGESGLA (171 aa)). The interval 47–215 (LPGHDGQDGR…ETGAKGESGL (169 aa)) is disordered. Over residues 51 to 65 (DGQDGRECPHGEKGD) the composition is skewed to basic and acidic residues. At K63 the chain carries 5-hydroxylysine. Positions 71–83 (PAGRAGRPGWVGP) are enriched in low complexity. At P78 the chain carries 4-hydroxyproline. K87 is modified (5-hydroxylysine). P96 is modified (4-hydroxyproline). K99 carries the post-translational modification 5-hydroxylysine. 4-hydroxyproline is present on residues P108, P111, P129, and P132. K135 and K141 each carry 5-hydroxylysine. The segment covering 139–148 (GPKGGVGAPG) has biased composition (gly residues). P147 and P153 each carry 4-hydroxyproline. 5-hydroxylysine is present on residues K159 and K162. Residues P171 and P195 each carry the 4-hydroxyproline modification. A 5-hydroxylysine modification is found at K198. Positions 201 to 203 (RGD) match the Cell attachment site motif. Residues 273-371 (QLCREAKGQL…SKQLLVICEF (99 aa)) enclose the C-type lectin domain. Disulfide bonds link C275–C369 and C347–C361. N-linked (GlcNAc...) asparagine glycosylation occurs at N337.

It belongs to the SFTPD family. As to quaternary structure, oligomeric complex of 4 set of homotrimers. In terms of processing, the hydroxylysines may be O-glycosylated.

Calcium-dependent lectin-like protein which binds to a yeast cell wall extract and immune complexes through the complement component (C3bi). It is capable of binding non-reducing terminal N-acetylglucosamine, mannose, and fucose residues. This Bos taurus (Bovine) protein is Conglutinin (CGN1).